The sequence spans 774 residues: Ion-translocating oxidoreductase complex subunit C (774 aa).

4Fe-4S ferredoxin-type domains follow at residues 369-397 and 407-436; these read GEPQ…QQLY and KATT…VQYF. Residues Cys-377, Cys-380, Cys-383, Cys-387, Cys-416, Cys-419, Cys-422, and Cys-426 each coordinate [4Fe-4S] cluster. Positions 602 to 750 are disordered; sequence KLEQQQANAE…EPEEQIDPRK (149 aa).

Belongs to the 4Fe4S bacterial-type ferredoxin family. RnfC subfamily. The complex is composed of six subunits: RsxA, RsxB, RsxC, RsxD, RsxE and RsxG. [4Fe-4S] cluster is required as a cofactor.

Its subcellular location is the cell inner membrane. Part of a membrane-bound complex that couples electron transfer with translocation of ions across the membrane. Required to maintain the reduced state of SoxR. This is Ion-translocating oxidoreductase complex subunit C from Escherichia coli O6:K15:H31 (strain 536 / UPEC).